A 761-amino-acid polypeptide reads, in one-letter code: Probable ubiquitin carboxyl-terminal hydrolase creB (761 aa).

Residues 1–45 (MGSFLRSFRHNGGSTAPSVGAVPAKKEPQPPPMTPLEKRLLDMGP) are disordered. Basic and acidic residues predominate over residues 36–45 (LEKRLLDMGP). Positions 55 to 468 (YGMENYGNTC…CAYVLFYQET (414 aa)) constitute a USP domain. The Nucleophile role is filled by Cys64. Disordered regions lie at residues 113–146 (EAEAQAEKQKAANAQRPGMPPNPQQKPEDKDSPE) and 242–269 (PLMEKSLPAPETADSVDQSSSTGSKTPN). Polar residues predominate over residues 256 to 269 (SVDQSSSTGSKTPN). The active-site Proton acceptor is the His419. The disordered stretch occupies residues 496–761 (LKQNGFPQSP…LRKKSFSILS (266 aa)). Positions 555-566 (PLSPVPPVPPIP) are enriched in pro residues. A coiled-coil region spans residues 577-640 (KNDALAKREE…ASKAEEDRRL (64 aa)). Over residues 580-649 (ALAKREEKER…LSTENGKEKQ (70 aa)) the composition is skewed to basic and acidic residues. A compositionally biased stretch (basic residues) spans 655–666 (RLKRGSKSLSHR). A compositionally biased stretch (low complexity) spans 692–710 (SQSGPTSEQQQQQRQQSPP). A compositionally biased stretch (pro residues) spans 712–722 (HDQPPNSPQPG). Residues 725-743 (TIREDEQVNHKDSKHERTG) are compositionally biased toward basic and acidic residues. Residues 744 to 761 (HGKWRSFSLRKKSFSILS) show a composition bias toward basic residues.

It belongs to the peptidase C19 family. As to quaternary structure, interacts with creA, creC and qutD.

It catalyses the reaction Thiol-dependent hydrolysis of ester, thioester, amide, peptide and isopeptide bonds formed by the C-terminal Gly of ubiquitin (a 76-residue protein attached to proteins as an intracellular targeting signal).. Its function is as follows. Ubiquitin thioesterase component of the regulatory network controlling carbon source utilization through ubiquitination and deubiquitination involving creA, creB, creC, creD and acrB. Deubiquitinates the creA catabolic repressor and the quinate permease qutD. Also plays a role in response to carbon starvation and the control of extracellular proteases activity. The polypeptide is Probable ubiquitin carboxyl-terminal hydrolase creB (creB) (Neosartorya fischeri (strain ATCC 1020 / DSM 3700 / CBS 544.65 / FGSC A1164 / JCM 1740 / NRRL 181 / WB 181) (Aspergillus fischerianus)).